The following is a 557-amino-acid chain: MGDLGAGLLQAGLLLLLLAAVHVPLGDFLARTFAGTRHLRLERGIYRVLRVDADADTRWPTYALSVLGFSTVSILFLYAFLRLQGFLPLSLGRPGMEPTQAWNTAVSFVGNTNWQSYAGESTLGHLVQMAGLTVQNFLSAAVGLAVAVALVRGLVARGTGTIGNFWVDLTRGTLRVLLPLAFAGAVLLLLTGVVQNFTGATTYPTLAGGSQTILGGPIASQEAVKELGTNGGGFFNANSAHPFENPNAVSNLLEVFLILVIPFSLPRAFGTLVGDHRQGLAVLSVMGTIFGASLALTTWAETHAGGSVPQAAGAAMEGKETRFGEWASALFATATTATSTGAVNSAHDSYTAAGGGVVLLNLVMGEVTPGGVGSGLYGMLVLAVITVFVAGLMVGRTPEYLGKRIGQREITCAALYVLVTPAVLLTGTAVALSDAATRSALLNTGSHGLTEMLYAFASAANNNGSAFAGLSANTPFYNTALGLAIWLGRFLPMVLVLALAGAFAAQRTAAETAGTLPTRSPTFAGMHLAVVVVVSALTFFPALALGPIAEALTGAQS.

The next 10 helical transmembrane spans lie at 4–24 (LGAG…VHVP), 61–81 (TYAL…YAFL), 131–151 (GLTV…VALV), 174–194 (LRVL…TGVV), 253–273 (LEVF…GTLV), 280–300 (LAVL…TTWA), 375–395 (GLYG…LMVG), 412–432 (CAAL…AVAL), 483–503 (LAIW…AGAF), and 528–548 (LAVV…LGPI).

It belongs to the KdpA family. In terms of assembly, the system is composed of three essential subunits: KdpA, KdpB and KdpC.

The protein resides in the cell membrane. Part of the high-affinity ATP-driven potassium transport (or Kdp) system, which catalyzes the hydrolysis of ATP coupled with the electrogenic transport of potassium into the cytoplasm. This subunit binds the extracellular potassium ions and delivers the ions to the membrane domain of KdpB through an intramembrane tunnel. The protein is Potassium-transporting ATPase potassium-binding subunit of Kineococcus radiotolerans (strain ATCC BAA-149 / DSM 14245 / SRS30216).